A 732-amino-acid polypeptide reads, in one-letter code: DNA gyrase subunit B, mitochondrial (732 aa).

The Toprim domain maps to 513 to 620 (SEIFIVEGDS…RYQRALFDAG (108 aa)). 3 residues coordinate Mg(2+): E519, D593, and D595.

It belongs to the type II topoisomerase GyrB family. As to quaternary structure, made up of two chains. The A chain is responsible for DNA breakage and rejoining; the B chain catalyzes ATP hydrolysis. The cofactor is Mg(2+). Mn(2+) serves as cofactor. Ca(2+) is required as a cofactor.

Its subcellular location is the mitochondrion. The catalysed reaction is ATP-dependent breakage, passage and rejoining of double-stranded DNA.. A type II topoisomerase that negatively supercoils closed circular double-stranded DNA in an ATP-dependent manner. The polypeptide is DNA gyrase subunit B, mitochondrial (GYRBM) (Arabidopsis thaliana (Mouse-ear cress)).